The chain runs to 208 residues: RNA chaperone ProQ (208 aa).

Basic and acidic residues-rich tracts occupy residues 99–115 (AQETLKESKAKVAEKNK) and 126–135 (PAKDKPENTA). Positions 99–149 (AQETLKESKAKVAEKNKATNKAAAKKAPAKDKPENTAKAKPKTAKKPAKPK) are disordered. Basic residues predominate over residues 137 to 149 (AKPKTAKKPAKPK).

It belongs to the ProQ family.

Its subcellular location is the cytoplasm. In terms of biological role, RNA chaperone with significant RNA binding, RNA strand exchange and RNA duplexing activities. The sequence is that of RNA chaperone ProQ from Idiomarina loihiensis (strain ATCC BAA-735 / DSM 15497 / L2-TR).